Consider the following 120-residue polypeptide: Ribosome-binding factor A (120 aa).

It belongs to the RbfA family. Monomer. Binds 30S ribosomal subunits, but not 50S ribosomal subunits or 70S ribosomes.

It localises to the cytoplasm. Its function is as follows. One of several proteins that assist in the late maturation steps of the functional core of the 30S ribosomal subunit. Associates with free 30S ribosomal subunits (but not with 30S subunits that are part of 70S ribosomes or polysomes). Required for efficient processing of 16S rRNA. May interact with the 5'-terminal helix region of 16S rRNA. The chain is Ribosome-binding factor A from Chlamydia pneumoniae (Chlamydophila pneumoniae).